The sequence spans 633 residues: Extracellular metalloproteinase 5 (633 aa).

The N-terminal stretch at 1–21 (MHGLLLAAAGLLSLPLHVIAH) is a signal peptide. The propeptide occupies 22 to 245 (PQPSTNLAGR…HNVVDYVSHA (224 aa)). A glycan (N-linked (GlcNAc...) asparagine) is linked at asparagine 286. Position 428 (histidine 428) interacts with Zn(2+). Glutamate 429 is an active-site residue. Residue histidine 432 coordinates Zn(2+). 2 N-linked (GlcNAc...) asparagine glycosylation sites follow: asparagine 592 and asparagine 621.

The protein belongs to the peptidase M36 family. Zn(2+) serves as cofactor.

It is found in the secreted. In terms of biological role, secreted metalloproteinase probably acting as a virulence factor. The protein is Extracellular metalloproteinase 5 (MEP5) of Arthroderma benhamiae (Trichophyton mentagrophytes).